The following is a 213-amino-acid chain: Ubiquitin-conjugating enzyme E2 S (213 aa).

Residues 13-159 (QIIRQVAKEV…ARMMTEIHAK (147 aa)) enclose the UBC core domain. Catalysis depends on C97, which acts as the Glycyl thioester intermediate. Positions 157–213 (HAKPTTKTAPTKNEETNCPSTSGTQSTSEGPMAKKHAGDKNAAEKKKKEKKRALRRL) are disordered. The span at 174 to 185 (CPSTSGTQSTSE) shows a compositional bias: polar residues. The span at 192-202 (HAGDKNAAEKK) shows a compositional bias: basic and acidic residues. The segment covering 203–213 (KKEKKRALRRL) has biased composition (basic residues).

It belongs to the ubiquitin-conjugating enzyme family.

It carries out the reaction S-ubiquitinyl-[E1 ubiquitin-activating enzyme]-L-cysteine + [E2 ubiquitin-conjugating enzyme]-L-cysteine = [E1 ubiquitin-activating enzyme]-L-cysteine + S-ubiquitinyl-[E2 ubiquitin-conjugating enzyme]-L-cysteine.. It participates in protein modification; protein ubiquitination. Its function is as follows. Catalyzes the covalent attachment of ubiquitin to other proteins. Acts as an essential factor of the anaphase promoting complex/cyclosome (APC/C), a cell cycle-regulated ubiquitin ligase that controls progression through mitosis. Acts by specifically elongating polyubiquitin chains initiated by the E2 enzyme UBCH10 on APC/C substrates, enhancing the degradation of APC/C substrates by the proteasome and promoting mitotic exit. The protein is Ubiquitin-conjugating enzyme E2 S of Branchiostoma floridae (Florida lancelet).